Reading from the N-terminus, the 464-residue chain is Fumarate hydratase class II (464 aa).

Substrate is bound by residues Ser98–Thr100, His129–Asp132, Ser139–Asn141, and Thr187. The active-site Proton donor/acceptor is His188. Residue Ser318 is part of the active site. Substrate is bound by residues Ser319 and Lys324–Asn326.

This sequence belongs to the class-II fumarase/aspartase family. Fumarase subfamily. Homotetramer.

It localises to the cytoplasm. The enzyme catalyses (S)-malate = fumarate + H2O. It participates in carbohydrate metabolism; tricarboxylic acid cycle; (S)-malate from fumarate: step 1/1. Functionally, involved in the TCA cycle. Catalyzes the stereospecific interconversion of fumarate to L-malate. The chain is Fumarate hydratase class II from Pasteurella multocida (strain Pm70).